The sequence spans 166 residues: MPDTAAPTPDRPGPDDPGRGRRLGVDVGTVRIGISSSDPDGILATPVETVSRDAKEDSDFRRIAELVEEMSVVEVVVGLPRNLREGTGSSARDAAGFARELGERIAPVPVRLVDERFTTTTAQRSLREAGVRSRQQRGIIDQAAAVAILQDWLEQRRRCGSEGDTP.

A disordered region spans residues 1–24 (MPDTAAPTPDRPGPDDPGRGRRLG).

This sequence belongs to the YqgF nuclease family.

The protein resides in the cytoplasm. Functionally, could be a nuclease involved in processing of the 5'-end of pre-16S rRNA. This is Putative pre-16S rRNA nuclease from Mycobacteroides abscessus (strain ATCC 19977 / DSM 44196 / CCUG 20993 / CIP 104536 / JCM 13569 / NCTC 13031 / TMC 1543 / L948) (Mycobacterium abscessus).